A 245-amino-acid chain; its full sequence is Sugar fermentation stimulation protein homolog (245 aa).

The protein belongs to the SfsA family.

The sequence is that of Sugar fermentation stimulation protein homolog from Yersinia pseudotuberculosis serotype I (strain IP32953).